The primary structure comprises 158 residues: Protein-export protein SecB (158 aa).

This sequence belongs to the SecB family. As to quaternary structure, homotetramer, a dimer of dimers. One homotetramer interacts with 1 SecA dimer.

The protein resides in the cytoplasm. In terms of biological role, one of the proteins required for the normal export of preproteins out of the cell cytoplasm. It is a molecular chaperone that binds to a subset of precursor proteins, maintaining them in a translocation-competent state. It also specifically binds to its receptor SecA. The sequence is that of Protein-export protein SecB from Rhodopseudomonas palustris (strain HaA2).